The chain runs to 614 residues: Vitamin B12 transporter BtuB (614 aa).

The signal sequence occupies residues methionine 1–alanine 20. A TonB box motif is present at residues aspartate 26–asparagine 33. The TBDR plug domain maps to proline 38–threonine 152. Cyanocob(III)alamin is bound by residues leucine 83, serine 85, asparagine 92, and valine 110 to serine 111. Residues histidine 155–phenylalanine 614 form the TBDR beta-barrel domain. 3 beta stranded membrane passes run threonine 158–glycine 165, tyrosine 169–glutamine 178, and threonine 184–threonine 195. Residues aspartate 199, glutamine 211, aspartate 213, and aspartate 215 each coordinate Ca(2+). 2 beta stranded membrane-spanning segments follow: residues phenylalanine 217–glutamate 227 and aspartate 232–asparagine 248. 2 residues coordinate Ca(2+): tyrosine 249 and aspartate 250. Cyanocob(III)alamin is bound at residue alanine 251. A Ca(2+)-binding site is contributed by aspartate 261. 14 beta stranded membrane passes run arginine 263 to asparagine 277, glutamate 279 to asparagine 296, threonine 309 to isoleucine 325, histidine 328 to tryptophan 337, tyrosine 353 to glycine 369, phenylalanine 371 to aspartate 381, phenylalanine 385 to isoleucine 400, tyrosine 403 to asparagine 417, lysine 434 to glutamate 443, valine 449 to asparagine 458, tyrosine 473 to phenylalanine 490, proline 494 to alanine 509, arginine 517 to tryptophan 529, and aspartate 535 to aspartate 550. Threonine 309 is a cyanocob(III)alamin binding site. Arginine 517 contacts cyanocob(III)alamin. Cyanocob(III)alamin is bound at residue tyrosine 551. Beta stranded transmembrane passes span threonine 558–alanine 572, isoleucine 585–valine 596, and alanine 602–phenylalanine 614. Positions tyrosine 597–phenylalanine 614 match the TonB C-terminal box motif.

The protein belongs to the TonB-dependent receptor family. BtuB (TC 1.B.14.3.1) subfamily.

It localises to the cell outer membrane. Its function is as follows. Involved in the active translocation of vitamin B12 (cyanocobalamin) across the outer membrane to the periplasmic space. It derives its energy for transport by interacting with the trans-periplasmic membrane protein TonB. The sequence is that of Vitamin B12 transporter BtuB from Escherichia coli O6:H1 (strain CFT073 / ATCC 700928 / UPEC).